Here is a 161-residue protein sequence, read N- to C-terminus: Nucleotide-binding protein XOO0647 (161 aa).

It belongs to the YajQ family.

Functionally, nucleotide-binding protein. The chain is Nucleotide-binding protein XOO0647 from Xanthomonas oryzae pv. oryzae (strain MAFF 311018).